A 476-amino-acid polypeptide reads, in one-letter code: Serine protease HTRA1B (476 aa).

The N-terminal stretch at 1 to 19 is a signal peptide; the sequence is MRLLILCASIILVPLLCDA. The IGFBP N-terminal domain maps to 25-109; that stretch reads YVIGCPERCD…RGKTGVCVCK (85 aa). Intrachain disulfides connect Cys-29-Cys-54, Cys-33-Cys-56, Cys-38-Cys-57, Cys-45-Cys-60, Cys-68-Cys-85, and Cys-79-Cys-106. The Kazal-like domain maps to 94–153; sequence TTTVRRRGKTGVCVCKSSEPVCGSDGVSYRNICELKRVSNRAQKLQQPPIIFIQRGACGK. The interval 200–360 is serine protease; the sequence is GSGFVVSEDG…IPSDKIRQFL (161 aa). Residues His-216, Asp-246, and Ser-324 each act as charge relay system in the active site. Residues 361-463 enclose the PDZ domain; the sequence is AESHDRQAKG…LRAVVRRGNE (103 aa).

Belongs to the peptidase S1C family. In terms of assembly, forms homotrimers. In the presence of substrate, may form higher-order multimers in a PDZ-independent manner.

It is found in the secreted. The protein localises to the cytoplasm. It localises to the cytosol. Its function is as follows. Serine protease with a variety of targets, including extracellular matrix proteins and proteoglycans. Through cleavage of proteoglycans, may release soluble FGF-glycosaminoglycan complexes that promote the range and intensity of FGF signals in the extracellular space. Regulates the availability of insulin-like growth factors (IGFs) by cleaving IGF-binding proteins. Inhibits signaling mediated by TGF-beta family members. Consequently, may regulate many physiological processes. Intracellularly, degrades TSC2, leading to the activation of TSC2 downstream targets. The polypeptide is Serine protease HTRA1B (htra1b) (Danio rerio (Zebrafish)).